Consider the following 585-residue polypeptide: MMQDATDPAVRAALQSQPSGLNSTDDWRQVMDRIMSLTARNPDAFRQQPQANRLSAILEAVVPARANPTHEKVLAIVNALAENRAIRPDEAGLVYDALLQRVARYNSGNVQTNLDRLVGDVREAVAQRERAQQQGNLGSMVALNAFLSTQPANVPRGQEDYTNFVSALRLMVTETPQSEVYQSGPDYFFQTSRQGLQTVNLSQAFKNLQGLWGVRAPTGDRATVSSLLTPNSRLLLLLIAPFTDSGSVSRDTYLGHLLTLYREAIGQAHVDEHTFQEITSVSRALGQEDTGSLEATLNYLLTNRRQKIPSLHSLNSEEERILRYVQQSVSLNLMRDGVTPSVALDMTARNMEPGMYASNRPFINRLMDYLHRAAAVNPEYFTNAILNPHWLPPPGFYTGGFEVPEGNDGFLWDDIDDSVFSPQPQTLLELQQREQAEAALRKESFRRPSSLSDLGAAAPRSDASSPFPSLIGSFTSTRTTRPRLLGEEEYLNNSLLQPQREKNLPPAFPNNGIESLVDKMSRWKTYAQEHRDVPGPRPPTRRQRHDRQRGLVWEDDDSADDSSVLDLGGSGNPFAHLRPRLGRMF.

Residues 1-24 are disordered; that stretch reads MMQDATDPAVRAALQSQPSGLNST. Residues 1-106 are peripentonal hexon-tethering domain; the sequence is MMQDATDPAV…ALLQRVARYN (106 aa). Over residues 14–24 the composition is skewed to polar residues; that stretch reads LQSQPSGLNST. The segment at 138–251 is binding to hexon-linking protein; the sequence is GSMVALNAFL…FTDSGSVSRD (114 aa). The residue at position 225 (S225) is a Phosphoserine; by host. T274 carries the post-translational modification Phosphothreonine; by host. Phosphoserine; by host occurs at positions 310, 444, 449, 450, 452, 469, and 473. The interval 438–475 is disordered; sequence AALRKESFRRPSSLSDLGAAAPRSDASSPFPSLIGSFT. A compositionally biased stretch (polar residues) spans 462 to 475; sequence DASSPFPSLIGSFT. Y490 bears the Phosphotyrosine; by host mark. S494 and S515 each carry phosphoserine; by host. Positions 528-573 are disordered; that stretch reads QEHRDVPGPRPPTRRQRHDRQRGLVWEDDDSADDSSVLDLGGSGNP. Residues 571–585 constitute a propeptide that is removed on maturation; that stretch reads GNPFAHLRPRLGRMF.

It belongs to the adenoviridae hexon-linking protein IIIa family. Interacts with hexon proteins; this interaction tethers the peripentonal hexons to hexons situated in the facet. Interacts with the penton protein (via N-terminus). Interacts with packaging protein 3; this interaction is required to promote correct genome packaging. Post-translationally, cleaved near the C-terminus by the viral protease during virion maturation to form the mature protein.

The protein resides in the virion. The protein localises to the host nucleus. Functionally, structural component of the virion that acts as a cement protein on the capsid exterior which mediates the interactions between the hexons, including the peripentonal hexons, and reaches all the way to the penton vertices. Two hexon linking proteins IIIa, one from each facet, stabilize the unique edge interface between a pair of facets. As the virus enters the host cell, hexon linking proteins IIIa are shed concomitant with virion acidification in the endosome. During virus assembly, seems to play a role in the serotype specificity of the packaging of viral DNA via its interaction with packaging protein 3. This Human adenovirus C serotype 2 (HAdV-2) protein is Pre-hexon-linking protein IIIa.